Consider the following 529-residue polypeptide: G-protein coupled receptor 161 (529 aa).

Topologically, residues 1 to 30 are extracellular; sequence MSLNSSLSCRKELSNLTEEEGGEGGVIITQ. N-linked (GlcNAc...) asparagine glycans are attached at residues asparagine 4 and asparagine 15. A helical transmembrane segment spans residues 31–51; that stretch reads FIAIIVITIFVCLGNLVIVVT. Topologically, residues 52–64 are cytoplasmic; sequence LYKKSYLLTLSNK. Residues 65-85 form a helical membrane-spanning segment; it reads FVFSLTLSNFLLSVLVLPFVV. The Extracellular segment spans residues 86–101; that stretch reads TSSIRREWIFGVVWCN. A disulfide bridge connects residues cysteine 100 and cysteine 178. A helical membrane pass occupies residues 102–123; it reads FSALLYLLISSASMLTLGVIAI. Topologically, residues 124 to 143 are cytoplasmic; that stretch reads DRYYAVLYPMVYPMKITGNR. A helical membrane pass occupies residues 144–164; that stretch reads AVMALVYIWLHSLIGCLPPLF. Over 165–190 the chain is Extracellular; the sequence is GWSSVEFDEFKWMCVAAWHREPGYTA. The chain crosses the membrane as a helical span at residues 191-211; it reads FWQIWCALFPFLVMLVCYGFI. Residues 212–269 lie on the Cytoplasmic side of the membrane; that stretch reads FRVARVKARKVHCGTVVIVEEDAQRTGRKNSSTSTSSSGSRRNAFQGVVYSANQCKAL. A helical transmembrane segment spans residues 270–290; the sequence is ITILVVLGAFMVTWGPYMVVI. The Extracellular segment spans residues 291–306; sequence ASEALWGKSSVSPSLE. The helical transmembrane segment at 307 to 327 threads the bilayer; the sequence is TWATWLSFASAVCHPLIYGLW. Over 328 to 529 the chain is Cytoplasmic; that stretch reads NKTVRKELLG…EGDVLAAEQR (202 aa).

It belongs to the G-protein coupled receptor 1 family.

Its subcellular location is the cell projection. The protein localises to the cilium membrane. It localises to the cell membrane. Its function is as follows. Key negative regulator of Shh signaling, which promotes the processing of GLI3 into GLI3R during neural tube development. Recruited by TULP3 and the IFT-A complex to primary cilia and acts as a regulator of the PKA-dependent basal repression machinery in Shh signaling by increasing cAMP levels, leading to promote the PKA-dependent processing of GLI3 into GLI3R and repress the Shh signaling. In presence of SHH, it is removed from primary cilia and is internalized into recycling endosomes, preventing its activity and allowing activation of the Shh signaling. Its ligand is unknown. This is G-protein coupled receptor 161 (GPR161) from Homo sapiens (Human).